A 252-amino-acid chain; its full sequence is Adapter protein MecA (252 aa).

It belongs to the MecA family. In terms of assembly, homodimer.

Its function is as follows. Enables the recognition and targeting of unfolded and aggregated proteins to the ClpC protease or to other proteins involved in proteolysis. The protein is Adapter protein MecA of Streptococcus uberis (strain ATCC BAA-854 / 0140J).